The primary structure comprises 335 residues: Phosphate acyltransferase (335 aa).

Belongs to the PlsX family. As to quaternary structure, homodimer. Probably interacts with PlsY.

The protein localises to the cytoplasm. It carries out the reaction a fatty acyl-[ACP] + phosphate = an acyl phosphate + holo-[ACP]. Its pathway is lipid metabolism; phospholipid metabolism. Its function is as follows. Catalyzes the reversible formation of acyl-phosphate (acyl-PO(4)) from acyl-[acyl-carrier-protein] (acyl-ACP). This enzyme utilizes acyl-ACP as fatty acyl donor, but not acyl-CoA. The polypeptide is Phosphate acyltransferase (Streptococcus suis (strain 98HAH33)).